The primary structure comprises 227 residues: 2-C-methyl-D-erythritol 4-phosphate cytidylyltransferase (227 aa).

This sequence belongs to the IspD/TarI cytidylyltransferase family. IspD subfamily.

It carries out the reaction 2-C-methyl-D-erythritol 4-phosphate + CTP + H(+) = 4-CDP-2-C-methyl-D-erythritol + diphosphate. It participates in isoprenoid biosynthesis; isopentenyl diphosphate biosynthesis via DXP pathway; isopentenyl diphosphate from 1-deoxy-D-xylulose 5-phosphate: step 2/6. Its function is as follows. Catalyzes the formation of 4-diphosphocytidyl-2-C-methyl-D-erythritol from CTP and 2-C-methyl-D-erythritol 4-phosphate (MEP). This chain is 2-C-methyl-D-erythritol 4-phosphate cytidylyltransferase, found in Thermosipho melanesiensis (strain DSM 12029 / CIP 104789 / BI429).